A 529-amino-acid polypeptide reads, in one-letter code: Probable E3 ubiquitin-protein ligase MGRN1 (529 aa).

An RING-type zinc finger spans residues 275–314 (ECVVCLSDLRDTLILPCRHLCLCNACADTLRYQANNCPIC). Disordered stretches follow at residues 341–362 (SPVL…IPPG) and 396–529 (EMGD…VEEC). 2 stretches are compositionally biased toward polar residues: residues 449–463 (AQPQ…SPSE) and 477–487 (NSGSESRSLGV). Positions 501 to 511 (SSLSQSESDPS) are enriched in low complexity. A compositionally biased stretch (polar residues) spans 520 to 529 (ESWSTAVEEC).

In terms of processing, autoubiquitinated in vitro.

It carries out the reaction S-ubiquitinyl-[E2 ubiquitin-conjugating enzyme]-L-cysteine + [acceptor protein]-L-lysine = [E2 ubiquitin-conjugating enzyme]-L-cysteine + N(6)-ubiquitinyl-[acceptor protein]-L-lysine.. The protein operates within protein modification; protein ubiquitination. In terms of biological role, E3 ubiquitin-protein ligase. Also acts as a negative regulator of hedgehog signaling. This is Probable E3 ubiquitin-protein ligase MGRN1 (mgrn1) from Danio rerio (Zebrafish).